Here is a 138-residue protein sequence, read N- to C-terminus: Large ribosomal subunit protein uL16 (138 aa).

Belongs to the universal ribosomal protein uL16 family. As to quaternary structure, part of the 50S ribosomal subunit.

Binds 23S rRNA and is also seen to make contacts with the A and possibly P site tRNAs. The chain is Large ribosomal subunit protein uL16 from Anaeromyxobacter dehalogenans (strain 2CP-1 / ATCC BAA-258).